The primary structure comprises 272 residues: Methylesterase 8 (272 aa).

Catalysis depends on Ser-102, which acts as the Acyl-ester intermediate. Catalysis depends on charge relay system residues Asp-222 and His-250.

It belongs to the AB hydrolase superfamily. Methylesterase family.

In terms of biological role, methylesterase shown to have carboxylesterase activity in vitro. This Arabidopsis thaliana (Mouse-ear cress) protein is Methylesterase 8.